Consider the following 158-residue polypeptide: Flagellar assembly factor FliW (158 aa).

This sequence belongs to the FliW family. In terms of assembly, interacts with translational regulator CsrA and flagellin(s).

It localises to the cytoplasm. Functionally, acts as an anti-CsrA protein, binds CsrA and prevents it from repressing translation of its target genes, one of which is flagellin. Binds to flagellin and participates in the assembly of the flagellum. The polypeptide is Flagellar assembly factor FliW (Moorella thermoacetica (strain ATCC 39073 / JCM 9320)).